A 1069-amino-acid polypeptide reads, in one-letter code: MLPNFWNFQFIFVIFCWIPIVVSDEKIVLKIGSISSRDNAKMLESILEMAKKKMTEQGVLGEKLDIQIITVEGCGASFEGVAAAAELYHVQKVDAYFGPYCSKELSPVATMASYWNIPIFAYTATSAEFANTKVYKTLLRTSFQSLNSISEATAAFMAHHNITKAAIVANIGTDSFEKIQSLEKALRSRGITVARRVMFEEAASAQDLVDNGYMNELRDNARVILPIFSSTRDLSTVFRNATWLANMASPEFIYINPLIVARNSEEPPVFYGKMAQKSIKAENPNTIQIYNSYGFSDDLLNEFLAIFDQNQRIYIDEKDLFNYVALYESFCVFAKLTEKYLHSLKEKPEDGKIRIDGKALWNMAVGMTFQGVLDNVIFDNGAERMTSFSAFYVDEKRDQIRTVSLINSTVTSKNCMDPVCIELVVSDVVTKFWSSPSGKLPDSEPECGFREENCDYTQTIVIATAVVCIILTVFLGIWLRRACETSALDKMPWRVFRDDVQILDEEQVKSVVSLNSASTKMSQVETKLIKNHAIVGVNTHAVYDLYEQRQNIRFTREDLILLTKMKQAVHDNINPFIGVSFNEKSELLLLWKFCSRGTLQDVIYCEKFAMDEKFQGAFVRDITMGLEYLHSSPIGYHGGLACWSVLIDKNWMLKLTDYAVCDPLKRWEKHGRINCKVDNEAEKQWQKMASLYVPPEIRTANEKNRLKRMDQKWQGQTILKRQQSDIYAFGVIIYEILFRSLPYDEKVDLTELAQKAAEGDKIQKPSIQRNKKLNPDLIALLQDCWSDQPDMRPTIRRVRLATEIALKTKGNLVDSMMRMMEEYANNLEKLVGERTKLAEEANLRAERLLFQLLPKHVAIELKAGRTVAPKMYDSATVMFSDIVGFTKLCSASTPIEVVNLLNKLYSEFDTVISKHDCYKVETIGDAYMVVSGIPIENGQRHVANISAVTLGIMDLLKVFEVPHRRDYRLTIRLGFASGQVSAAVVGLSSPRYCLFGETVNIAAVMESSGEGGRVQITETSKILLENEYPEFIIEIRGINKDVKQDDFVTYWLTGKDEDYFKKKNNTFDF.

An N-terminal signal peptide occupies residues 1 to 23; the sequence is MLPNFWNFQFIFVIFCWIPIVVS. Topologically, residues 24 to 458 are extracellular; the sequence is DEKIVLKIGS…FREENCDYTQ (435 aa). Asn-161, Asn-240, and Asn-407 each carry an N-linked (GlcNAc...) asparagine glycan. The chain crosses the membrane as a helical span at residues 459–479; sequence TIVIATAVVCIILTVFLGIWL. Topologically, residues 480-1069 are cytoplasmic; the sequence is RRACETSALD…FKKKNNTFDF (590 aa). The 310-residue stretch at 497 to 806 folds into the Protein kinase domain; that stretch reads RDDVQILDEE…RVRLATEIAL (310 aa). ATP contacts are provided by residues 503–511 and Lys-527; that span reads LDEEQVKSV. The region spanning 876–1006 is the Guanylate cyclase domain; sequence TVMFSDIVGF…ETVNIAAVME (131 aa). 3 residues coordinate Mg(2+): Asp-881, Ile-882, and Asp-925.

The protein belongs to the adenylyl cyclase class-4/guanylyl cyclase family. As to expression, expressed bilaterally in ASE and AFD sensory neurons.

The protein resides in the cell membrane. It catalyses the reaction GTP = 3',5'-cyclic GMP + diphosphate. In terms of biological role, guanylate cyclase involved in the production of the second messenger cGMP. This is Receptor-type guanylate cyclase gcy-29 from Caenorhabditis elegans.